Consider the following 525-residue polypeptide: Probable protein kinase UbiB (525 aa).

Residues 118 to 500 (DFERVPVASA…QKRTNRLLQG (383 aa)) form the Protein kinase domain. Residues 124–132 (VASASIAQV) and K150 contribute to the ATP site. The Proton acceptor role is filled by D285. A helical transmembrane segment spans residues 501–521 (LLLFGVAVGVGAVLARAFLAL).

The protein belongs to the ABC1 family. UbiB subfamily.

It localises to the cell inner membrane. It participates in cofactor biosynthesis; ubiquinone biosynthesis [regulation]. In terms of biological role, is probably a protein kinase regulator of UbiI activity which is involved in aerobic coenzyme Q (ubiquinone) biosynthesis. This Paraburkholderia phytofirmans (strain DSM 17436 / LMG 22146 / PsJN) (Burkholderia phytofirmans) protein is Probable protein kinase UbiB.